The following is a 490-amino-acid chain: GTPase Der (490 aa).

EngA-type G domains follow at residues 3–166 and 203–376; these read PVVA…MDDV and IKLA…DSST. GTP-binding positions include 9–16, 56–60, 118–121, 209–216, 256–260, and 321–324; these read GRPNVGKS, DTGGI, NKTD, DTAGV, and NKWD. The region spanning 377–461 is the KH-like domain; that stretch reads RRVSTAMLTR…PIRIQFKEGE (85 aa).

It belongs to the TRAFAC class TrmE-Era-EngA-EngB-Septin-like GTPase superfamily. EngA (Der) GTPase family. As to quaternary structure, associates with the 50S ribosomal subunit.

Functionally, GTPase that plays an essential role in the late steps of ribosome biogenesis. The polypeptide is GTPase Der (Salmonella typhi).